Reading from the N-terminus, the 115-residue chain is uncharacterized protein (115 aa).

The interval 9-30 (EGLRERGASGKNEQKKKKKEKI) is disordered.

This is an uncharacterized protein from Saccharomyces cerevisiae (strain ATCC 204508 / S288c) (Baker's yeast).